A 529-amino-acid polypeptide reads, in one-letter code: Bifunctional purine biosynthesis protein PurH (529 aa).

An MGS-like domain is found at 2–149 (TNLVPVGRAL…KNHRFVNVVT (148 aa)).

It belongs to the PurH family.

The enzyme catalyses (6R)-10-formyltetrahydrofolate + 5-amino-1-(5-phospho-beta-D-ribosyl)imidazole-4-carboxamide = 5-formamido-1-(5-phospho-D-ribosyl)imidazole-4-carboxamide + (6S)-5,6,7,8-tetrahydrofolate. It carries out the reaction IMP + H2O = 5-formamido-1-(5-phospho-D-ribosyl)imidazole-4-carboxamide. The protein operates within purine metabolism; IMP biosynthesis via de novo pathway; 5-formamido-1-(5-phospho-D-ribosyl)imidazole-4-carboxamide from 5-amino-1-(5-phospho-D-ribosyl)imidazole-4-carboxamide (10-formyl THF route): step 1/1. Its pathway is purine metabolism; IMP biosynthesis via de novo pathway; IMP from 5-formamido-1-(5-phospho-D-ribosyl)imidazole-4-carboxamide: step 1/1. This chain is Bifunctional purine biosynthesis protein PurH, found in Cereibacter sphaeroides (strain ATCC 17029 / ATH 2.4.9) (Rhodobacter sphaeroides).